The sequence spans 1309 residues: Disease resistance protein RPP2A (1309 aa).

The TIR 1 domain maps to 9–173 (RRYDVFPSFS…MVADDVSKKL (165 aa)). Glu-84 is an active-site residue. Positions 187–418 (EAHLEAMSSI…FKKTLRNYLP (232 aa)) constitute an NB-ARC 1 domain. An ALOG domain is found at 488–585 (PNRRHSNDDW…KECILVFSCH (98 aa)). The TIR 2 domain occupies 574–737 (REKECILVFS…EVVRNASLRL (164 aa)). One can recognise an NB-ARC 2 domain in the interval 755-987 (SQSTDVEIMG…IFLDLACFFR (233 aa)). A coiled-coil region spans residues 1114–1141 (LPHGLDTLPDELSLLHWENYPLVYLPQK). LRR repeat units follow at residues 1145 to 1167 (VNLVELNMPYSNMEKLWEGKKNL), 1168 to 1195 (EKLKNIKLSHSRELTDILMLSEALNLEH), 1214 to 1237 (CGKLVSLNMKDCSRLRSLPSMVDL), 1238 to 1258 (TTLKLLNLSGCSEFEDIQDFA), 1259 to 1283 (PNLEEIYLAGTSIRELPLSIRNLTE), and 1285 to 1307 (VTLDLENCERLQEMPSLPVEIIR).

It belongs to the disease resistance TIR-NB-LRR family.

It carries out the reaction NAD(+) + H2O = ADP-D-ribose + nicotinamide + H(+). In terms of biological role, disease resistance protein that cooperates with RPP2B to confer resistance to Hyaloperonospora parasitica isolate Cala2. This Arabidopsis thaliana (Mouse-ear cress) protein is Disease resistance protein RPP2A.